We begin with the raw amino-acid sequence, 71 residues long: Gas vesicle protein A (71 aa).

The interval 12 to 22 (LAEVIDRILDK) is alpha helix 1. The interval 26-34 (IDAWARVSL) is beta-strand 1. The beta turn stretch occupies residues 35–37 (VGI). Positions 38–46 (ELLAIEARV) are beta-strand 2. The interval 51–70 (VETYLKYAEAVGLTQXAXXA) is alpha helix 2.

Belongs to the gas vesicle GvpA family. In terms of assembly, the gas vesicle shell is 2 nm thick and consists of a single layer of this protein. It forms helical ribs nearly perpendicular to the long axis of the vesicle.

The protein resides in the gas vesicle shell. Gas vesicles are hollow, gas filled proteinaceous nanostructures found in some microorganisms. During planktonic growth they allow positioning of the organism at a favorable depth for light or nutrient acquisition. GvpA forms the protein shell. The sequence is that of Gas vesicle protein A from Microcystis sp. (strain BC 84/1).